The following is a 243-amino-acid chain: MAELLLGVNIDHIATLRNARGTDYPDPVQAAFIAEQAGADGITVHLREDRRHITDRDVRILRQTLHTRMNLEMAVTEEMLAIAVETRPHFCCLVPEKRQEVTTEGGLDVAGQRDKMRDACARLAAAGIQVSLFIDADERQINAAAEVGAPFIEIHTGCYANAETDAEQAKELARIASAATLAARLGLKVNAGHGLTYHNVKAIAALPEMHELNIGHAIIGRAVMTGLKEAVAEMKRLMLEARG.

Asn-9 is a 3-amino-2-oxopropyl phosphate binding site. 1-deoxy-D-xylulose 5-phosphate is bound at residue 11-12 (DH). Arg-20 is a binding site for 3-amino-2-oxopropyl phosphate. His-45 (proton acceptor) is an active-site residue. Arg-47 and His-52 together coordinate 1-deoxy-D-xylulose 5-phosphate. The Proton acceptor role is filled by Glu-72. Thr-102 lines the 1-deoxy-D-xylulose 5-phosphate pocket. Catalysis depends on His-193, which acts as the Proton donor. 3-amino-2-oxopropyl phosphate-binding positions include Gly-194 and 215 to 216 (GH).

The protein belongs to the PNP synthase family. As to quaternary structure, homooctamer; tetramer of dimers.

It is found in the cytoplasm. It carries out the reaction 3-amino-2-oxopropyl phosphate + 1-deoxy-D-xylulose 5-phosphate = pyridoxine 5'-phosphate + phosphate + 2 H2O + H(+). The protein operates within cofactor biosynthesis; pyridoxine 5'-phosphate biosynthesis; pyridoxine 5'-phosphate from D-erythrose 4-phosphate: step 5/5. Its function is as follows. Catalyzes the complicated ring closure reaction between the two acyclic compounds 1-deoxy-D-xylulose-5-phosphate (DXP) and 3-amino-2-oxopropyl phosphate (1-amino-acetone-3-phosphate or AAP) to form pyridoxine 5'-phosphate (PNP) and inorganic phosphate. This is Pyridoxine 5'-phosphate synthase from Salmonella typhi.